We begin with the raw amino-acid sequence, 386 residues long: 8-amino-7-oxononanoate synthase (386 aa).

Residue R19 coordinates substrate. 106 to 107 (GY) lines the pyridoxal 5'-phosphate pocket. H131 lines the substrate pocket. Residues S177, H205, and T233 each coordinate pyridoxal 5'-phosphate. K236 is modified (N6-(pyridoxal phosphate)lysine). T350 contributes to the substrate binding site.

Belongs to the class-II pyridoxal-phosphate-dependent aminotransferase family. BioF subfamily. Homodimer. Pyridoxal 5'-phosphate is required as a cofactor.

The catalysed reaction is 6-carboxyhexanoyl-[ACP] + L-alanine + H(+) = (8S)-8-amino-7-oxononanoate + holo-[ACP] + CO2. It functions in the pathway cofactor biosynthesis; biotin biosynthesis. In terms of biological role, catalyzes the decarboxylative condensation of pimeloyl-[acyl-carrier protein] and L-alanine to produce 8-amino-7-oxononanoate (AON), [acyl-carrier protein], and carbon dioxide. The sequence is that of 8-amino-7-oxononanoate synthase from Alcanivorax borkumensis (strain ATCC 700651 / DSM 11573 / NCIMB 13689 / SK2).